Here is a 276-residue protein sequence, read N- to C-terminus: Malectin-B (276 aa).

Positions 1-26 are cleaved as a signal peptide; it reads MLSIRTVLGPLAAILLTVIGPFGAHG. Topologically, residues 27–253 are lumenal; that stretch reads SGLADKVMWA…TPNPYASDNS (227 aa). Tyr67, Tyr89, Tyr116, Phe117, and Asp186 together coordinate a carbohydrate. The tract at residues 202–249 is disordered; that stretch reads DVPQLQPHPGLEKKEEEEEEEEEEGSPSKKQSNKNRVQSGPRTPNPYA. The span at 216–226 shows a compositional bias: acidic residues; the sequence is EEEEEEEEEEG. Residues 229 to 249 show a composition bias toward polar residues; the sequence is SKKQSNKNRVQSGPRTPNPYA. The N-linked (GlcNAc...) asparagine glycan is linked to Asn252. The helical transmembrane segment at 254–274 threads the bilayer; it reads SLMFPILVAFGVFIPTLFCLC. Topologically, residues 275–276 are cytoplasmic; that stretch reads RL.

It belongs to the malectin family.

Its subcellular location is the endoplasmic reticulum membrane. Carbohydrate-binding protein with a strong ligand preference for Glc2-N-glycan. May play a role in the early steps of protein N-glycosylation. Can bind di- or higher oligomers but not monomers of glucose, including maltose, maltotriose, maltotetraose, maltoheptaose, nigerose, kojibose, cellobiose and isomaltose, although based on their subcellular locations, these are unlikely to all be physiological ligands. This is Malectin-B from Xenopus laevis (African clawed frog).